Reading from the N-terminus, the 154-residue chain is Superoxide dismutase [Cu-Zn] (154 aa).

Cu cation is bound by residues His47, His49, and His64. Cys58 and Cys147 are oxidised to a cystine. Residues His64, His72, His81, and Asp84 each coordinate Zn(2+). His121 contacts Cu cation. Over residues 126 to 137 (DLGRGGNEESKK) the composition is skewed to basic and acidic residues. The interval 126–147 (DLGRGGNEESKKTGNAGPRPAC) is disordered.

It belongs to the Cu-Zn superoxide dismutase family. Homodimer. It depends on Cu cation as a cofactor. Zn(2+) is required as a cofactor.

It localises to the cytoplasm. It carries out the reaction 2 superoxide + 2 H(+) = H2O2 + O2. Its function is as follows. Destroys radicals which are normally produced within the cells and which are toxic to biological systems. Plays an important role in the phase transition, and may be important in vivo, as it would facilitate the intracellular survival of the fungus by providing a non-toxic environment in the macrophage phagolysosomes. This is Superoxide dismutase [Cu-Zn] from Talaromyces marneffei (Penicillium marneffei).